The chain runs to 437 residues: MIFPIWKKCLIQLQIKLSPVEFSLWILPLKVTIKNNIIYIYTPNLFIFRWIKKKYVNIFKKILYKICSNNPPKIIINIEKKKLEKKKCIYKKKNIQIYLHSEINKKYQFHNFIQGQSNQLAYYSSYKFTKNLKNFYNPLFLYGNTGLGKTHLLHAIGNKFLIKNKKKKVIYIHSENFIQNMVNSLKNNSIDKFKNYYRSIDVLLLDDIQFFSNKKKSQEELFNTFNTLFNKQQKIVLTADCYPEYISGITEQLKSRFKWGLTISINPPELKTRIKILLHKAYENKILLSYEVAKYIAKKIFSNVRELEGILKKIQILSILNKEKITINLVKKILNKIKKKKKNINIIYIQKIVAKYFNIRISDMISQKRSQSIVHPRQIAMTLAKKLTHYSFSEIGTAFGKKDHTTVLYAYKKINQLKKKKTEIYSDFIYLFNQLNA.

The tract at residues 1–82 (MIFPIWKKCL…KIIINIEKKK (82 aa)) is domain I, interacts with DnaA modulators. A domain II region spans residues 82-101 (KLEKKKCIYKKKNIQIYLHS). Positions 102–318 (EINKKYQFHN…GILKKIQILS (217 aa)) are domain III, AAA+ region. ATP contacts are provided by Gly146, Gly148, Lys149, and Thr150. The interval 319 to 437 (ILNKEKITIN…FIYLFNQLNA (119 aa)) is domain IV, binds dsDNA.

This sequence belongs to the DnaA family. In terms of assembly, oligomerizes as a right-handed, spiral filament on DNA at oriC.

The protein localises to the cytoplasm. In terms of biological role, plays an essential role in the initiation and regulation of chromosomal replication. ATP-DnaA binds to the origin of replication (oriC) to initiate formation of the DNA replication initiation complex once per cell cycle. Binds the DnaA box (a 9 base pair repeat at the origin) and separates the double-stranded (ds)DNA. Forms a right-handed helical filament on oriC DNA; dsDNA binds to the exterior of the filament while single-stranded (ss)DNA is stabiized in the filament's interior. The ATP-DnaA-oriC complex binds and stabilizes one strand of the AT-rich DNA unwinding element (DUE), permitting loading of DNA polymerase. After initiation quickly degrades to an ADP-DnaA complex that is not apt for DNA replication. Binds acidic phospholipids. This is Chromosomal replication initiator protein DnaA from Buchnera aphidicola subsp. Cinara cedri (strain Cc).